A 440-amino-acid chain; its full sequence is R3H and coiled-coil domain-containing protein 1 (440 aa).

In terms of domain architecture, R3H spans 16-81 (NDFVHRIQEE…KRRTVICHQD (66 aa)). The interval 154-225 (TSVLKREAPA…LGPESQSGKG (72 aa)) is disordered. Residues 157-168 (LKREAPAGRDPE) show a composition bias toward basic and acidic residues. Residue Ser-236 is modified to Phosphoserine. A coiled-coil region spans residues 242–300 (LEKGKESLLEKRLVAEEEEDEEEVEEDGPSSCSEDDYSELLQEITDNLTKKEIQIEKIH). The interval 254 to 276 (LVAEEEEDEEEVEEDGPSSCSED) is disordered. Positions 257-276 (EEEEDEEEVEEDGPSSCSED) are enriched in acidic residues.

In Homo sapiens (Human), this protein is R3H and coiled-coil domain-containing protein 1.